The sequence spans 255 residues: Ribonuclease HII (255 aa).

The 186-residue stretch at 70–255 (DLVAGIDEVG…FEPVPEFLIK (186 aa)) folds into the RNase H type-2 domain. A divalent metal cation contacts are provided by D76, E77, and D168.

The protein belongs to the RNase HII family. Requires Mn(2+) as cofactor. The cofactor is Mg(2+).

It is found in the cytoplasm. It catalyses the reaction Endonucleolytic cleavage to 5'-phosphomonoester.. Endonuclease that specifically degrades the RNA of RNA-DNA hybrids. This Pediococcus pentosaceus (strain ATCC 25745 / CCUG 21536 / LMG 10740 / 183-1w) protein is Ribonuclease HII.